The sequence spans 252 residues: Ribose-5-phosphate isomerase (252 aa).

This sequence belongs to the ribose 5-phosphate isomerase family.

It is found in the cytoplasm. The catalysed reaction is aldehydo-D-ribose 5-phosphate = D-ribulose 5-phosphate. The protein operates within carbohydrate degradation; pentose phosphate pathway; D-ribose 5-phosphate from D-ribulose 5-phosphate (non-oxidative stage): step 1/1. In Debaryomyces hansenii (strain ATCC 36239 / CBS 767 / BCRC 21394 / JCM 1990 / NBRC 0083 / IGC 2968) (Yeast), this protein is Ribose-5-phosphate isomerase (RKI1).